Consider the following 427-residue polypeptide: Glutamate-1-semialdehyde 2,1-aminomutase (427 aa).

The residue at position 265 (Lys265) is an N6-(pyridoxal phosphate)lysine.

This sequence belongs to the class-III pyridoxal-phosphate-dependent aminotransferase family. HemL subfamily. As to quaternary structure, homodimer. Requires pyridoxal 5'-phosphate as cofactor.

The protein localises to the cytoplasm. The enzyme catalyses (S)-4-amino-5-oxopentanoate = 5-aminolevulinate. Its pathway is porphyrin-containing compound metabolism; protoporphyrin-IX biosynthesis; 5-aminolevulinate from L-glutamyl-tRNA(Glu): step 2/2. The polypeptide is Glutamate-1-semialdehyde 2,1-aminomutase (Nitratiruptor sp. (strain SB155-2)).